The sequence spans 154 residues: Myoglobin (154 aa).

The region spanning 2 to 148 (GLSDGEWQLV…FRNDMATKYK (147 aa)) is the Globin domain. Ser4 is modified (phosphoserine). His65 contacts nitrite. Residue His65 coordinates O2. Residue His94 coordinates heme b.

Belongs to the globin family. Monomeric.

It localises to the cytoplasm. The protein localises to the sarcoplasm. It catalyses the reaction Fe(III)-heme b-[protein] + nitric oxide + H2O = Fe(II)-heme b-[protein] + nitrite + 2 H(+). The catalysed reaction is H2O2 + AH2 = A + 2 H2O. Monomeric heme protein which primary function is to store oxygen and facilitate its diffusion within muscle tissues. Reversibly binds oxygen through a pentacoordinated heme iron and enables its timely and efficient release as needed during periods of heightened demand. Depending on the oxidative conditions of tissues and cells, and in addition to its ability to bind oxygen, it also has a nitrite reductase activity whereby it regulates the production of bioactive nitric oxide. Under stress conditions, like hypoxia and anoxia, it also protects cells against reactive oxygen species thanks to its pseudoperoxidase activity. The polypeptide is Myoglobin (MB) (Tachyglossus aculeatus aculeatus (Southeast Australian short-beaked echidna)).